Here is a 354-residue protein sequence, read N- to C-terminus: Serum paraoxonase/lactonase 3 (354 aa).

The cysteines at positions 42 and 352 are disulfide-linked. Asparagine 50 is a glycosylation site (N-linked (GlcNAc...) asparagine). Ca(2+) contacts are provided by glutamate 53 and aspartate 54. Histidine 114 functions as the Proton acceptor in the catalytic mechanism. Isoleucine 116 lines the Ca(2+) pocket. Serine 165 bears the Phosphoserine mark. Residues asparagine 167, aspartate 168, asparagine 223, aspartate 268, and asparagine 269 each coordinate Ca(2+). Asparagine 269 and asparagine 323 each carry an N-linked (GlcNAc...) asparagine glycan.

Belongs to the paraoxonase family. Homodimer. Ca(2+) is required as a cofactor. In terms of processing, glycosylated. Post-translationally, the signal sequence is not cleaved.

It localises to the secreted. Its subcellular location is the extracellular space. The catalysed reaction is a phenyl acetate + H2O = a phenol + acetate + H(+). It catalyses the reaction An aryl dialkyl phosphate + H2O = dialkyl phosphate + an aryl alcohol.. It carries out the reaction an N-acyl-L-homoserine lactone + H2O = an N-acyl-L-homoserine + H(+). Its function is as follows. Has low activity towards the organophosphate paraxon and aromatic carboxylic acid esters. Rapidly hydrolyzes lactones such as statin prodrugs (e.g. lovastatin). Hydrolyzes aromatic lactones and 5- or 6-member ring lactones with aliphatic substituents but not simple lactones or those with polar substituents. The protein is Serum paraoxonase/lactonase 3 (Pon3) of Mus musculus (Mouse).